The primary structure comprises 274 residues: Formamidopyrimidine-DNA glycosylase (274 aa).

The Schiff-base intermediate with DNA role is filled by Pro-2. Glu-3 serves as the catalytic Proton donor. The Proton donor; for beta-elimination activity role is filled by Lys-57. DNA contacts are provided by His-90, Arg-109, and Lys-150. Residues Phe-235–His-269 form an FPG-type zinc finger. Arg-259 acts as the Proton donor; for delta-elimination activity in catalysis.

Belongs to the FPG family. As to quaternary structure, monomer. The cofactor is Zn(2+).

The catalysed reaction is Hydrolysis of DNA containing ring-opened 7-methylguanine residues, releasing 2,6-diamino-4-hydroxy-5-(N-methyl)formamidopyrimidine.. It carries out the reaction 2'-deoxyribonucleotide-(2'-deoxyribose 5'-phosphate)-2'-deoxyribonucleotide-DNA = a 3'-end 2'-deoxyribonucleotide-(2,3-dehydro-2,3-deoxyribose 5'-phosphate)-DNA + a 5'-end 5'-phospho-2'-deoxyribonucleoside-DNA + H(+). Involved in base excision repair of DNA damaged by oxidation or by mutagenic agents. Acts as a DNA glycosylase that recognizes and removes damaged bases. Has a preference for oxidized purines, such as 7,8-dihydro-8-oxoguanine (8-oxoG). Has AP (apurinic/apyrimidinic) lyase activity and introduces nicks in the DNA strand. Cleaves the DNA backbone by beta-delta elimination to generate a single-strand break at the site of the removed base with both 3'- and 5'-phosphates. This chain is Formamidopyrimidine-DNA glycosylase, found in Proteus mirabilis (strain HI4320).